The sequence spans 209 residues: Iron-sulfur cluster assembly 2 homolog, mitochondrial (209 aa).

The N-terminal 27 residues, 1-27, are a transit peptide targeting the mitochondrion; that stretch reads MIRSIFKKNSSLPYFLKRSFITKPHSI. Fe cation is bound by residues Cys-134, Cys-199, and Cys-201.

Belongs to the HesB/IscA family. Fe cation is required as a cofactor.

It is found in the mitochondrion. Its function is as follows. Involved in the maturation of mitochondrial 4Fe-4S proteins functioning late in the iron-sulfur cluster assembly pathway. May be involved in the binding of an intermediate of Fe/S cluster assembly. The polypeptide is Iron-sulfur cluster assembly 2 homolog, mitochondrial (isca2) (Dictyostelium discoideum (Social amoeba)).